We begin with the raw amino-acid sequence, 506 residues long: Histone deacetylase complex subunit CTI6 (506 aa).

Positions 49-71 (EESVKQEDVPMEGGEGEVEEEEG) are disordered. Residues 62 to 71 (GEGEVEEEEG) are compositionally biased toward acidic residues. The PHD-type zinc finger occupies 72 to 123 (ETRCICGELDTPDDSGFFIQCEQCSSWQHGYCVSITQDNAPDKYWCEQCRPE). Positions 138-425 (IYKPVQEKRR…KPRLPPQRTS (288 aa)) are disordered. Position 174 is a phosphothreonine (threonine 174). At serine 175 the chain carries Phosphoserine. Threonine 177 is modified (phosphothreonine). The span at 179–195 (DNVDDIGDEEDEVEDEA) shows a compositional bias: acidic residues. 2 positions are modified to phosphoserine: serine 216 and serine 267. Basic and acidic residues-rich tracts occupy residues 231–271 (DSDK…HQED) and 312–342 (DDMK…EKES). Basic residues predominate over residues 373-393 (ASSRGSKRVSKPARKGNRTRR). Positions 394-404 (SNTSSDTNQNR) are enriched in polar residues. Positions 405–415 (RSADIGTDKPV) are enriched in basic and acidic residues.

In terms of assembly, component of the RPD3C(L) complex composed of at least ASH1, CTI6, DEP1, PHO23, RPD3, RXT2, RXT3, SAP30, SDS3, SIN3, UME1 and UME6. Interacts with CYC8.

The protein resides in the nucleus. Component of the RPD3C(L) histone deacetylase complex (HDAC). Responsible for the deacetylation of lysine residues on the N-terminal part of the core histones (H2A, H2B, H3 and H4). Histone deacetylation gives a tag for epigenetic repression and plays an important role in transcriptional regulation, cell cycle progression and developmental events. CTI6 links the SAGA coactivator to the CYC8-TUP1 corepressor. Involved in transcription regulation of heme-regulated genes and required for GCN5 recruitment, histone H3 acetylation and SPT15/TBP binding to promoters. The polypeptide is Histone deacetylase complex subunit CTI6 (CTI6) (Saccharomyces cerevisiae (strain ATCC 204508 / S288c) (Baker's yeast)).